The following is a 22-amino-acid chain: Cysteine-rich venom protein notescatin (22 aa).

The span at 1-15 (SNKKDYQKEIVDKHN) shows a compositional bias: basic and acidic residues. The disordered stretch occupies residues 1 to 22 (SNKKDYQKEIVDKHNALRRSVK).

It belongs to the CRISP family. Contains 8 disulfide bonds. In terms of tissue distribution, expressed by the venom gland.

The protein localises to the secreted. In Notechis scutatus scutatus (Mainland tiger snake), this protein is Cysteine-rich venom protein notescatin.